Consider the following 282-residue polypeptide: Pantothenate synthetase (282 aa).

Position 30–37 (30–37 (MGYLHEGH)) interacts with ATP. The active-site Proton donor is His37. Gln61 provides a ligand contact to (R)-pantoate. A beta-alanine-binding site is contributed by Gln61. 147–150 (GMKD) is an ATP binding site. Gln153 lines the (R)-pantoate pocket. ATP-binding positions include Val176 and 184–187 (KSSR).

This sequence belongs to the pantothenate synthetase family. As to quaternary structure, homodimer.

It is found in the cytoplasm. The enzyme catalyses (R)-pantoate + beta-alanine + ATP = (R)-pantothenate + AMP + diphosphate + H(+). It participates in cofactor biosynthesis; (R)-pantothenate biosynthesis; (R)-pantothenate from (R)-pantoate and beta-alanine: step 1/1. In terms of biological role, catalyzes the condensation of pantoate with beta-alanine in an ATP-dependent reaction via a pantoyl-adenylate intermediate. This is Pantothenate synthetase from Bacillus cereus (strain G9842).